The sequence spans 76 residues: Putative snRNP Sm-like protein (76 aa).

The 73-residue stretch at 4–76 (RPLDVIHRSL…VLAISPVDIE (73 aa)) folds into the Sm domain.

It belongs to the snRNP Sm proteins family.

The polypeptide is Putative snRNP Sm-like protein (Thermococcus gammatolerans (strain DSM 15229 / JCM 11827 / EJ3)).